Consider the following 339-residue polypeptide: 4-dimethylallyltryptophan N-methyltransferase easF (339 aa).

The protein belongs to the methyltransferase superfamily. In terms of assembly, homodimer.

The catalysed reaction is 4-(3-methylbut-2-enyl)-L-tryptophan + S-adenosyl-L-methionine = 4-(3-methylbut-2-enyl)-L-abrine + S-adenosyl-L-homocysteine + H(+). It functions in the pathway alkaloid biosynthesis; ergot alkaloid biosynthesis. Its function is as follows. 4-dimethylallyltryptophan N-methyltransferase; part of the gene cluster that mediates the biosynthesis of fumiclavanine C, a fungal ergot alkaloid. DmaW catalyzes the first step of ergot alkaloid biosynthesis by condensing dimethylallyl diphosphate (DMAP) and tryptophan to form 4-dimethylallyl-L-tryptophan. The second step is catalyzed by the methyltransferase easF that methylates 4-dimethylallyl-L-tryptophan in the presence of S-adenosyl-L-methionine, resulting in the formation of 4-dimethylallyl-L-abrine. The catalase easC and the FAD-dependent oxidoreductase easE then transform 4-dimethylallyl-L-abrine to chanoclavine-I which is further oxidized by EasD in the presence of NAD(+), resulting in the formation of chanoclavine-I aldehyde. EasA reduces chanoclavine-I aldehyde to dihydrochanoclavine-I aldehyde that spontaneously dehydrates to form 6,8-dimethyl-6,7-didehydroergoline. EasG then catalyzes the reduction of 6,8-dimethyl-6,7-didehydroergoline to form festuclavine. Hydrolysis of festuclavine by easM then leads to the formation of fumigaclavine B which is in turn acetylated by easN to fumigaclavine A. Finally, easL catalyzes the conversion of fumigaclavine A into fumigaclavine C by attaching a dimethylallyl moiety to C-2 of the indole nucleus. This is 4-dimethylallyltryptophan N-methyltransferase easF from Aspergillus fumigatus (strain ATCC MYA-4609 / CBS 101355 / FGSC A1100 / Af293) (Neosartorya fumigata).